The primary structure comprises 354 residues: Heat-inducible transcription repressor HrcA (354 aa).

This sequence belongs to the HrcA family.

In terms of biological role, negative regulator of class I heat shock genes (grpE-dnaK-dnaJ and groELS operons). Prevents heat-shock induction of these operons. The chain is Heat-inducible transcription repressor HrcA from Novosphingobium aromaticivorans (strain ATCC 700278 / DSM 12444 / CCUG 56034 / CIP 105152 / NBRC 16084 / F199).